We begin with the raw amino-acid sequence, 136 residues long: DNA-directed RNA polymerase subunit omega (136 aa).

Residues 81 to 136 (EAEAVPLLSSSPAAAAVAPQSSGDDGDIQFDRMSEEDLLRGLENLAPPTETEDEGD) are disordered. Residues 83–99 (EAVPLLSSSPAAAAVAP) are compositionally biased toward low complexity. A compositionally biased stretch (basic and acidic residues) spans 109–120 (QFDRMSEEDLLR).

This sequence belongs to the RNA polymerase subunit omega family. In terms of assembly, the RNAP catalytic core consists of 2 alpha, 1 beta, 1 beta' and 1 omega subunit. When a sigma factor is associated with the core the holoenzyme is formed, which can initiate transcription.

The enzyme catalyses RNA(n) + a ribonucleoside 5'-triphosphate = RNA(n+1) + diphosphate. Promotes RNA polymerase assembly. Latches the N- and C-terminal regions of the beta' subunit thereby facilitating its interaction with the beta and alpha subunits. This is DNA-directed RNA polymerase subunit omega from Methylobacterium nodulans (strain LMG 21967 / CNCM I-2342 / ORS 2060).